The chain runs to 108 residues: UPF0145 protein Npun_F4817 (108 aa).

Belongs to the UPF0145 family.

The sequence is that of UPF0145 protein Npun_F4817 from Nostoc punctiforme (strain ATCC 29133 / PCC 73102).